A 611-amino-acid polypeptide reads, in one-letter code: DNA mismatch repair protein MutL (611 aa).

It belongs to the DNA mismatch repair MutL/HexB family.

Functionally, this protein is involved in the repair of mismatches in DNA. It is required for dam-dependent methyl-directed DNA mismatch repair. May act as a 'molecular matchmaker', a protein that promotes the formation of a stable complex between two or more DNA-binding proteins in an ATP-dependent manner without itself being part of a final effector complex. The chain is DNA mismatch repair protein MutL from Borreliella afzelii (strain PKo) (Borrelia afzelii).